The following is a 380-amino-acid chain: MIISSASDYRAAAKRKLPRFLFDYIDGGAYAEHTLRANGSDLADISLRQRVLKNVDNVSLETRLFGESLAMPIILSPVGLSGMYARRGEVQVARAAANKRIPFCLSTVSVCSIEEVASQSDQAIWFQLYVLKDRGFMKNALERAKAAGVTTLVFTVDMPTPGARYRDAHSGMSGPYAAPRRILQAMTKPDWALNVGLLGRPHDLGNISRYLGKATTLEDYVGWLANNFDPSISWKDLEWIREFWQGPMIIKGILDPQDARDALSFGADGIVVSNHGGRQLDGVLSTAKALPPIVQAVGSDLTVLADSGIRSGLDVVRMLALGAKGVLLGRSMAYALGADGQRGVENMLDIFAREMHVAMTLTGVTSIEQIDASILVKAVA.

The FMN hydroxy acid dehydrogenase domain occupies M1–A380. Residue Y24 coordinates substrate. S106 and Q127 together coordinate FMN. Y129 provides a ligand contact to substrate. T155 is a binding site for FMN. R164 lines the substrate pocket. Residue K251 participates in FMN binding. Catalysis depends on H275, which acts as the Proton acceptor. R278 serves as a coordination point for substrate. D306 to R330 contacts FMN.

The protein belongs to the FMN-dependent alpha-hydroxy acid dehydrogenase family. Homotetramer. Requires FMN as cofactor.

The protein localises to the cell inner membrane. It carries out the reaction (S)-lactate + A = pyruvate + AH2. Catalyzes the conversion of L-lactate to pyruvate. Is coupled to the respiratory chain. In Pseudomonas syringae pv. syringae (strain B728a), this protein is L-lactate dehydrogenase.